A 396-amino-acid chain; its full sequence is MKQMAAQKAWTDEERLELAAQLDAELDAFIDGLEKKRYEEGWPEDRWQEEMDKHPFFMKRAPQPGDDVHPMFEGLQKLKYDPEENTRDELALNYKEDGNFYMKHKKFRMAIYSFTEGIKTKTDNPDVLAVLYNNRSAAHFFIKNYRSSLSDAQRALFYKPDYTKARWRSAQCAYELERFDLCTQMCEELLEVDVDNEVAIALLHKNKMKKLEIERNQRKEAAEAKRRLTRFHRLRDAIEQRAIKFDDQKVGKKDVLSEELLYPKFLPLEDHPVHLDEDGSTLIWPAAFSYPEFLYSDFYQQLPETTTMRDCLATLLTEKLPYDKAHNYRLGNVHVYYENRKVGCVHKVDEEKQLAEIIAEKGFFVSGGALLFYVVHKDSRVEQEFINERRRPMVYS.

TPR repeat units follow at residues 91–124, 129–162, and 163–196; these read ALNYKEDGNFYMKHKKFRMAIYSFTEGIKTKTDN, AVLYNNRSAAHFFIKNYRSSLSDAQRALFYKPDY, and TKARWRSAQCAYELERFDLCTQMCEELLEVDVDN.

It belongs to the TTC4 family. As to quaternary structure, forms a complex with Hsp83 and Hsp70aa. Interacts with DNApol-alpha180; the interaction inhibits the activity of the DNA polymerase and occurs only in proliferating cells but not in quiescent cells. In terms of tissue distribution, more abundant in young embryos, pupae and females and a lower level expression seen in late embryos, larvae and males.

Its subcellular location is the nucleus. The protein localises to the nucleoplasm. It localises to the cytoplasm. Its function is as follows. May act as a co-chaperone for HSP83. This chain is DNA polymerase interacting tetratricopeptide repeat-containing, protein of 47 kDa (Dpit47), found in Drosophila melanogaster (Fruit fly).